The following is a 350-amino-acid chain: Probable poly-beta-1,6-N-acetyl-D-glucosamine export protein (350 aa).

10 helical membrane passes run 7–29 (ELVY…TQIT), 44–66 (FYIR…LLTT), 79–101 (TRVK…SESL), 116–138 (LLGQ…SYII), 145–167 (LFNS…YYFT), 187–204 (IIFG…MGYN), 211–233 (FLER…FIAL), 243–262 (SFSY…ILGI), 269–291 (MLFN…HPII), and 306–328 (TMVF…GMIL).

The protein belongs to the acyltransferase 3 family.

It is found in the cell membrane. Its function is as follows. Presumably involved in the export of the biofilm adhesin polysaccharide poly-beta-1,6-N-acetyl-D-glucosamine (PNAG, also referred to as PIA) across the cell membrane. The sequence is that of Probable poly-beta-1,6-N-acetyl-D-glucosamine export protein (icaC) from Staphylococcus aureus (strain MRSA252).